We begin with the raw amino-acid sequence, 684 residues long: DNA-directed RNA polymerase subunit beta' (684 aa).

Residues C69, C71, C87, and C90 each coordinate Zn(2+). Mg(2+) contacts are provided by D491, D493, and D495.

Belongs to the RNA polymerase beta' chain family. RpoC1 subfamily. In terms of assembly, in plastids the minimal PEP RNA polymerase catalytic core is composed of four subunits: alpha, beta, beta', and beta''. When a (nuclear-encoded) sigma factor is associated with the core the holoenzyme is formed, which can initiate transcription. It depends on Mg(2+) as a cofactor. Zn(2+) is required as a cofactor.

It localises to the plastid. It is found in the chloroplast. The catalysed reaction is RNA(n) + a ribonucleoside 5'-triphosphate = RNA(n+1) + diphosphate. Its function is as follows. DNA-dependent RNA polymerase catalyzes the transcription of DNA into RNA using the four ribonucleoside triphosphates as substrates. The protein is DNA-directed RNA polymerase subunit beta' of Phaseolus vulgaris (Kidney bean).